Reading from the N-terminus, the 198-residue chain is MICOS complex subunit Mic26 (198 aa).

Positions 1 to 23 are cleaved as a signal peptide; that stretch reads MFKVIQRSVGPASLSLLTFRVYA. N-linked (GlcNAc...) asparagine glycosylation occurs at N63. The chain crosses the membrane as a helical span at residues 108-128; the sequence is PGFFPRLGVIGFAGFVGLLFA.

The protein belongs to the apolipoprotein O/MICOS complex subunit Mic27 family. In terms of assembly, component of the mitochondrial contact site and cristae organizing system (MICOS) complex, composed of at least MICOS10/MIC10, CHCHD3/MIC19, CHCHD6/MIC25, APOOL/MIC27, IMMT/MIC60, APOO/MIC23/MIC26 and MICOS13/MIC13. This complex was also known under the names MINOS or MitOS complex. The MICOS complex associates with mitochondrial outer membrane proteins SAMM50, MTX1 and MTX2 (together described as components of the mitochondrial outer membrane sorting assembly machinery (SAM) complex) and DNAJC11, mitochondrial inner membrane protein TMEM11 and with HSPA9. The MICOS and SAM complexes together with DNAJC11 are part of a large protein complex spanning both membranes termed the mitochondrial intermembrane space bridging (MIB) complex. Interacts with IMMT/MIC60. Interacts with MICOS10/MIC10 and APOOL/MIC27.

Its subcellular location is the mitochondrion inner membrane. The protein resides in the mitochondrion. It is found in the endoplasmic reticulum membrane. The protein localises to the golgi apparatus membrane. Component of the MICOS complex, a large protein complex of the mitochondrial inner membrane that plays crucial roles in the maintenance of crista junctions, inner membrane architecture, and formation of contact sites to the outer membrane. Plays a crucial role in crista junction formation and mitochondrial function. Can induce cardiac lipotoxicity by enhancing mitochondrial respiration and fatty acid metabolism in cardiac myoblasts. Promotes cholesterol efflux from macrophage cells. Detected in HDL, LDL and VLDL. Secreted by a microsomal triglyceride transfer protein (MTTP)-dependent mechanism, probably as a VLDL-associated protein that is subsequently transferred to HDL. The polypeptide is MICOS complex subunit Mic26 (Apoo) (Mus musculus (Mouse)).